The chain runs to 211 residues: MLTIALSKGRILDDTLPLLAEAGIVPTENPDKSRKLIIPTTQDDVRLLIVRATDVPTYVEHGAADLGVAGKDVLMEYGGQGLYEPLDLQIARCKLMTAGVVGAPEPKGRLRVATKFVNVAKRYYAEQGRQVDIIKLYGSMELAPLINLADKIIDVVDTGNTLRANGLEPQDLIATISSRLVVNKASMKMQHARIQSLIDTLRQAVESRHRG.

The protein belongs to the ATP phosphoribosyltransferase family. Short subfamily. In terms of assembly, heteromultimer composed of HisG and HisZ subunits.

It is found in the cytoplasm. The enzyme catalyses 1-(5-phospho-beta-D-ribosyl)-ATP + diphosphate = 5-phospho-alpha-D-ribose 1-diphosphate + ATP. The protein operates within amino-acid biosynthesis; L-histidine biosynthesis; L-histidine from 5-phospho-alpha-D-ribose 1-diphosphate: step 1/9. Functionally, catalyzes the condensation of ATP and 5-phosphoribose 1-diphosphate to form N'-(5'-phosphoribosyl)-ATP (PR-ATP). Has a crucial role in the pathway because the rate of histidine biosynthesis seems to be controlled primarily by regulation of HisG enzymatic activity. The protein is ATP phosphoribosyltransferase of Pseudomonas putida (strain W619).